The primary structure comprises 1350 residues: Protein transport protein SEC16A homolog (1350 aa).

5 disordered regions span residues tyrosine 26 to serine 45, leucine 73 to proline 97, methionine 964 to valine 1063, alanine 1118 to isoleucine 1216, and glutamine 1235 to leucine 1350. The segment covering lysine 35–serine 45 has biased composition (basic and acidic residues). Serine 43 carries the phosphoserine modification. Positions histidine 970 to serine 1002 are enriched in polar residues. The segment covering serine 1150–proline 1168 has biased composition (low complexity). Composition is skewed to polar residues over residues threonine 1195–glutamine 1210 and arginine 1289–asparagine 1316. A compositionally biased stretch (low complexity) spans serine 1317–glutamate 1343.

Belongs to the SEC16 family. As to quaternary structure, interacts with SEC13A, SEC13B and SEC31A.

It localises to the golgi apparatus. It is found in the golgi stack. The protein localises to the endoplasmic reticulum. Its function is as follows. Required for efficient protein export from the endoplasmic reticulum (ER) to the Golgi by regulating COPII coat dynamics at the ER. Functions as a scaffold and regulator of COPII coat assembly at ER exit sites. In Arabidopsis thaliana (Mouse-ear cress), this protein is Protein transport protein SEC16A homolog.